A 691-amino-acid chain; its full sequence is Elongation factor G (691 aa).

The 275-residue stretch at 8 to 282 folds into the tr-type G domain; it reads ERVRNIGIAA…AVIDYLPAPV (275 aa). GTP-binding positions include 17 to 24, 81 to 85, and 135 to 138; these read AHIDAGKT, DTPGH, and NKMD.

It belongs to the TRAFAC class translation factor GTPase superfamily. Classic translation factor GTPase family. EF-G/EF-2 subfamily.

Its subcellular location is the cytoplasm. In terms of biological role, catalyzes the GTP-dependent ribosomal translocation step during translation elongation. During this step, the ribosome changes from the pre-translocational (PRE) to the post-translocational (POST) state as the newly formed A-site-bound peptidyl-tRNA and P-site-bound deacylated tRNA move to the P and E sites, respectively. Catalyzes the coordinated movement of the two tRNA molecules, the mRNA and conformational changes in the ribosome. This Synechococcus sp. (strain CC9605) protein is Elongation factor G.